A 456-amino-acid polypeptide reads, in one-letter code: Glycerol-3-phosphate acyltransferase 4 (456 aa).

A signal peptide spans 1-37 (MFLLLPFDSLIVNLLGISLTVLFTLLLVFIIVPAIFG). 2 helical membrane-spanning segments follow: residues 156 to 176 (ISLR…CFLL) and 180 to 200 (IALA…VGYL). Asn247 is a glycosylation site (N-linked (GlcNAc...) asparagine). The short motif at 248 to 253 (HTSPID) is the HXXXXD motif element. 3 N-linked (GlcNAc...) asparagine glycosylation sites follow: Asn327, Asn328, and Asn362.

This sequence belongs to the 1-acyl-sn-glycerol-3-phosphate acyltransferase family. In terms of tissue distribution, highly expressed in testis.

Its subcellular location is the endoplasmic reticulum membrane. It carries out the reaction sn-glycerol 3-phosphate + an acyl-CoA = a 1-acyl-sn-glycero-3-phosphate + CoA. It catalyses the reaction dodecanoyl-CoA + sn-glycerol 3-phosphate = 1-dodecanoyl-sn-glycerol 3-phosphate + CoA. The enzyme catalyses sn-glycerol 3-phosphate + hexadecanoyl-CoA = 1-hexadecanoyl-sn-glycero-3-phosphate + CoA. The catalysed reaction is sn-glycerol 3-phosphate + octadecanoyl-CoA = 1-octadecanoyl-sn-glycero-3-phosphate + CoA. It carries out the reaction sn-glycerol 3-phosphate + (9Z)-octadecenoyl-CoA = 1-(9Z-octadecenoyl)-sn-glycero-3-phosphate + CoA. It catalyses the reaction (9Z,12Z)-octadecadienoyl-CoA + sn-glycerol 3-phosphate = 1-(9Z,12Z)-octadecadienoyl-sn-glycero-3-phosphate + CoA. The protein operates within phospholipid metabolism; CDP-diacylglycerol biosynthesis; CDP-diacylglycerol from sn-glycerol 3-phosphate: step 1/3. Converts glycerol-3-phosphate to 1-acyl-sn-glycerol-3-phosphate (lysophosphatidic acid or LPA) by incorporating an acyl moiety at the sn-1 position of the glycerol backbone. Active against both saturated and unsaturated long-chain fatty acyl-CoAs. Protects cells against lipotoxicity. The polypeptide is Glycerol-3-phosphate acyltransferase 4 (Mus musculus (Mouse)).